We begin with the raw amino-acid sequence, 186 residues long: Archaemetzincin (186 aa).

H136 serves as a coordination point for Zn(2+). The active-site Proton acceptor is E137. 6 residues coordinate Zn(2+): H140, H146, C147, C152, C171, and C174.

The protein belongs to the peptidase M54 family. In terms of assembly, monomer. It depends on Zn(2+) as a cofactor.

Functionally, probable zinc metalloprotease whose natural substrate is unknown. This chain is Archaemetzincin, found in Thermococcus kodakarensis (strain ATCC BAA-918 / JCM 12380 / KOD1) (Pyrococcus kodakaraensis (strain KOD1)).